The chain runs to 60 residues: Conotoxin Cal6.20 (60 aa).

The N-terminal stretch at Met-1 to Ala-22 is a signal peptide. 3 disulfides stabilise this stretch: Cys-32–Cys-42, Cys-35–Cys-48, and Cys-41–Cys-55.

The protein belongs to the conotoxin O1 superfamily. As to expression, expressed by the venom duct.

Its subcellular location is the secreted. Probable neurotoxin. The sequence is that of Conotoxin Cal6.20 from Californiconus californicus (California cone).